A 460-amino-acid polypeptide reads, in one-letter code: MCYNMDMTNFKKNDIFEAEVLDLTHEGQGVVKIDSFPFFVDNALPGERIKMHVLKVGKSFGFGRVDEFISQSKHRVTQLNLDYLRTGIADFGHLSYDEQVKFKHKQVVDILRKTAGKSDYPVLPVVEAIKTINYRNKAQIPVQMVDGLLTTGFYRKNSHTLIPVEDFYIQHPEIDAVVLFLRDEFRKINLQAYDEKTRKGWLRNIVVRRAFHTGEMMITLVVTSKKLPEKVELVIDHLVERFTNIKSVQLNINSGTGSFILGKEFILLYGKDFITDLMLDKTYQISAPAFYQVNTPQAEKLYETAYEFAGLKPGDVVIDAYSGIGTIGISMADRVAKVYGMEVVPAAVENAKRNAQLNELENTHYEVGTAEKIMPKWLSEGIKPDVIFVDPPRKGLDEGFIKAAAMMNPRRIVYISCNPATFARDVVRFEADGYLLDKVQPVDLFPQTHHIELVASFNKK.

The TRAM domain occupies 9–67 (NFKKNDIFEAEVLDLTHEGQGVVKIDSFPFFVDNALPGERIKMHVLKVGKSFGFGRVDE). Residues Q292, Y321, E342, and D390 each contribute to the S-adenosyl-L-methionine site. The active-site Nucleophile is C417.

The protein belongs to the class I-like SAM-binding methyltransferase superfamily. RNA M5U methyltransferase family.

This is an uncharacterized protein from Lactococcus lactis subsp. lactis (strain IL1403) (Streptococcus lactis).